Consider the following 535-residue polypeptide: MAKSRYSRKNKGKKLQRVQENTVSTEEKSVPEVETIDFNGFQIPKVYDGKLERKPMELEIKKGFVEGMNGDAKIFCNDDLFNLLTFEMIKDISNNYPSCVRQTANAATLPGVVASLAMPDAHSGYGFSIGGVVAMRLDNSEAVICPGGVGFDINCGVRLIRTNLQREDIEQHKSRLADELFKQIPSGVGTKAQIAFSPEDFDSIMTEGLEFLVKNGYAWEEDLSHCEEHGKIANADPSLVSKSAKSRGYKQVGTLGSGNHYLEVQVVDEIMDVEAAKAMGINEVGQVCIMVHCGSRGLGHQVCQDYIDLCMKSGICNPIDKQLTGVPFNSPIGQQYYSAMNCCANFAFANRGMITYRIRQAFETVLRMKPKKMDMHLVYDVCHNIAKVEEHEVDNKKVQCIVHRKGATRAFPPQHPDISEDYKEIGQPAIIGGSMGTCSYVLVGTQEGMKKSFGSTCHGAGRKMSRVKAMDNLTSKDVINRIKEMGIELRITDPKLAAEEADEAYKDVTEVVETCQAAGISKIVLRLKPLIVIKG.

Residues 1–16 (MAKSRYSRKNKGKKLQ) are compositionally biased toward basic residues. Positions 1–29 (MAKSRYSRKNKGKKLQRVQENTVSTEEKS) are disordered. The Mn(2+) site is built by D152, C155, H260, H292, and H383. 259–263 (NHYLE) is a binding site for GMP. GMP is bound by residues 383-384 (HN), 432-435 (GGSM), S439, 458-461 (HGAG), and K534. H458 acts as the GMP-histidine intermediate in catalysis.

The protein belongs to the RtcB family. Catalytic component of the tRNA-splicing ligase complex. Mn(2+) is required as a cofactor.

The catalysed reaction is a 3'-end 3'-phospho-ribonucleotide-RNA + a 5'-end dephospho-ribonucleoside-RNA + GTP = a ribonucleotidyl-ribonucleotide-RNA + GMP + diphosphate. The enzyme catalyses a 3'-end 2',3'-cyclophospho-ribonucleotide-RNA + a 5'-end dephospho-ribonucleoside-RNA + GTP + H2O = a ribonucleotidyl-ribonucleotide-RNA + GMP + diphosphate + H(+). In terms of biological role, catalytic subunit of the tRNA-splicing ligase complex that acts by directly joining spliced tRNA halves to mature-sized tRNAs by incorporating the precursor-derived splice junction phosphate into the mature tRNA as a canonical 3',5'-phosphodiester. May act as an RNA ligase with broad substrate specificity, and may function toward other RNAs. In Entamoeba dispar (strain ATCC PRA-260 / SAW760), this protein is RNA-splicing ligase RtcB homolog 1.